Here is an 87-residue protein sequence, read N- to C-terminus: Keratin-associated protein 7-1 (87 aa).

An 11 X 2 AA repeats of G-[YCGS] region spans residues G43–Y84.

It belongs to the KRTAP type 7 family. In terms of assembly, interacts with hair keratins. As to expression, expressed in the upper portion of the hair cortex.

In terms of biological role, in the hair cortex, hair keratin intermediate filaments are embedded in an interfilamentous matrix, consisting of hair keratin-associated proteins (KRTAP), which are essential for the formation of a rigid and resistant hair shaft through their extensive disulfide bond cross-linking with abundant cysteine residues of hair keratins. The matrix proteins include the high-sulfur and high-glycine-tyrosine keratins. This chain is Keratin-associated protein 7-1 (KRTAP7-1), found in Homo sapiens (Human).